A 622-amino-acid chain; its full sequence is Low affinity potassium transport system protein Kup (622 aa).

Transmembrane regions (helical) follow at residues 9-29 (LPAITLAAIGVVYGDIGTSPL), 49-69 (VFGFLSLIFWLLIFVVSIKYL), 103-123 (VIMGLIGGSFFYGEVVITPAI), 137-157 (PQLDTWIVPLSIIVLTLLFMI), 165-185 (VGKLFAPIMLTWFLILAGLGL), 213-233 (VSFIALGAVVLSITGGEVLYA), 247-267 (WFTVVLPSLTLNYFGQGALLL), 276-296 (PFFLLAPDWALIPLLIIAALA), 337-357 (IYIPFVNWMLYVAVVIVIVSF), 363-383 (LAAAYGIAVTGTMVLTSILST), 396-416 (FVALILIAFLCVDIPLFTANL), and 419-439 (LLSGGWLPLSLGTVMFIVMTT).

It belongs to the HAK/KUP transporter (TC 2.A.72) family.

It localises to the cell inner membrane. The catalysed reaction is K(+)(in) + H(+)(in) = K(+)(out) + H(+)(out). Its function is as follows. Responsible for the low-affinity transport of potassium into the cell. Likely operates as a K(+):H(+) symporter. The protein is Low affinity potassium transport system protein Kup of Shigella flexneri.